A 502-amino-acid polypeptide reads, in one-letter code: Galactose/methyl galactoside import ATP-binding protein MglA (502 aa).

ABC transporter domains are found at residues 10–245 (LEMT…VGRE) and 255–502 (NEPK…SRYL). Residue 42 to 49 (GENGAGKS) coordinates ATP.

The protein belongs to the ABC transporter superfamily. Galactose/methyl galactoside importer (TC 3.A.1.2.3) family. In terms of assembly, the complex is composed of one ATP-binding protein (MglA), two transmembrane proteins (MglC) and a solute-binding protein (MglB).

It localises to the cell inner membrane. It catalyses the reaction D-galactose(out) + ATP + H2O = D-galactose(in) + ADP + phosphate + H(+). The catalysed reaction is methyl beta-D-galactoside(out) + ATP + H2O = methyl beta-D-galactoside(in) + ADP + phosphate + H(+). Its function is as follows. Part of the ABC transporter complex MglABC involved in galactose/methyl galactoside import. Responsible for energy coupling to the transport system. The sequence is that of Galactose/methyl galactoside import ATP-binding protein MglA from Vibrio cholerae serotype O1 (strain ATCC 39315 / El Tor Inaba N16961).